The chain runs to 326 residues: Pyruvate dehydrogenase E1 component subunit alpha (326 aa).

In terms of assembly, heterodimer of an alpha and a beta chain. Thiamine diphosphate is required as a cofactor.

The catalysed reaction is N(6)-[(R)-lipoyl]-L-lysyl-[protein] + pyruvate + H(+) = N(6)-[(R)-S(8)-acetyldihydrolipoyl]-L-lysyl-[protein] + CO2. Its function is as follows. The pyruvate dehydrogenase complex catalyzes the overall conversion of pyruvate to acetyl-CoA and CO(2). It contains multiple copies of three enzymatic components: pyruvate dehydrogenase (E1), dihydrolipoamide acetyltransferase (E2) and lipoamide dehydrogenase (E3). This chain is Pyruvate dehydrogenase E1 component subunit alpha (pdhA), found in Rickettsia felis (strain ATCC VR-1525 / URRWXCal2) (Rickettsia azadi).